Consider the following 352-residue polypeptide: Divinyl chlorophyll a/b light-harvesting protein PcbA (352 aa).

6 helical membrane-spanning segments follow: residues 27 to 47 (FIAAHVAHAGLIVFWAGAFTL), 90 to 110 (VLAIAIVHLVSSMVLAAGGLL), 142 to 162 (FILGHHLIILGFAVILLVEWA), 203 to 223 (VMGGHAFLAFVLITGGAWHIA), 243 to 263 (AVLSWSLAGIGWMAIIAAFWS), and 306 to 326 (LANVHYYFGFFFIQGHLWHAL).

The protein belongs to the PsbB/PsbC family. IsiA/Pcb subfamily. The antenna complex consists of divinyl chlorophylls (a and b) and divinyl chlorophyll a/b binding proteins and binds less divinyl chlorophyll b than does low-light-adapted Prochlorococcus. Also forms complexes with PSII, consisting of a PSII dimer and 4 or 8 PcbA subunits. These complexes are also found under conditions of iron-starvation. It depends on divinyl chlorophyll a as a cofactor. Requires divinyl chlorophyll b as cofactor.

It is found in the cellular thylakoid membrane. In terms of biological role, the antenna complex functions as a light receptor, it captures and delivers excitation energy to photosystem II and possibly to photosystem I. The Prochlorales pcb genes are not related to higher plant LHCs. The polypeptide is Divinyl chlorophyll a/b light-harvesting protein PcbA (pcbA) (Prochlorococcus marinus subsp. pastoris (strain CCMP1986 / NIES-2087 / MED4)).